The sequence spans 775 residues: Kazrin (775 aa).

The tract at residues 38–66 (AELSGGGGPGPGPGAAASASAAGDSAATN) is disordered. The span at 51 to 64 (GAAASASAAGDSAA) shows a compositional bias: low complexity. Residues 74–256 (AQVLLREEVS…LATLTKDVPK (183 aa)) are a coiled coil. Residues 174–333 (RDFIRNYEQH…SAAEGDRSST (160 aa)) form an interaction with PPL region. Residues 290-427 (QQTLYHSHPP…QSLSLSEGEE (138 aa)) form a disordered region. A phosphoserine mark is found at serine 352, serine 367, and serine 387. Over residues 411–422 (SQCSPTRQSLSL) the composition is skewed to polar residues. SAM domains lie at 446-511 (WKAG…YRDA), 524-588 (DHHW…LYQV), and 612-679 (WTNQ…SAVF). Disordered regions lie at residues 688–715 (REAERFGTPPGRASSVTRAGKEENSSGL) and 729–762 (RGFSSKDPDFHDDYGSLQNEDCGDDDPQSRLEQC). Residues 732-742 (SSKDPDFHDDY) are compositionally biased toward basic and acidic residues.

The protein belongs to the kazrin family. In terms of assembly, isoform 2, isoform 3 and isoform 4 interact with PPL N-terminus. Isoform 2, isoform 3 and isoform 4 are expressed in several cell lines including keratinocytes and bladder and epidermoid carcinoma (at protein level). Isoform 2, isoform 3 and isoform 4 are expressed in hair follicle and interfollicular epidermis (at protein level).

It localises to the cytoplasm. Its subcellular location is the cytoskeleton. It is found in the cell junction. The protein localises to the desmosome. The protein resides in the nucleus. In terms of biological role, component of the cornified envelope of keratinocytes. May be involved in the interplay between adherens junctions and desmosomes. The function in the nucleus is not known. The sequence is that of Kazrin from Homo sapiens (Human).